The chain runs to 304 residues: Putative S-adenosyl-L-methionine-dependent methyltransferase MSMEG_1482/MSMEI_1446 (304 aa).

S-adenosyl-L-methionine contacts are provided by residues aspartate 130 and 159–160 (DL).

It belongs to the UPF0677 family.

Exhibits S-adenosyl-L-methionine-dependent methyltransferase activity. The sequence is that of Putative S-adenosyl-L-methionine-dependent methyltransferase MSMEG_1482/MSMEI_1446 from Mycolicibacterium smegmatis (strain ATCC 700084 / mc(2)155) (Mycobacterium smegmatis).